The following is a 120-amino-acid chain: Large ribosomal subunit protein uL18 (120 aa).

The protein belongs to the universal ribosomal protein uL18 family. As to quaternary structure, part of the 50S ribosomal subunit; part of the 5S rRNA/L5/L18/L25 subcomplex. Contacts the 5S and 23S rRNAs.

This is one of the proteins that bind and probably mediate the attachment of the 5S RNA into the large ribosomal subunit, where it forms part of the central protuberance. This is Large ribosomal subunit protein uL18 from Afipia carboxidovorans (strain ATCC 49405 / DSM 1227 / KCTC 32145 / OM5) (Oligotropha carboxidovorans).